The following is a 476-amino-acid chain: MNFETTIGLEVHIELKTNSKMYSPSPVNYGAEPNTNTNVIDWGYPGTLPTLNKGAYTLGMMVATALHADIARDTHFDRKNYFYPDNPKAYQITQYEQPLGKDGYIEVEIDGHKKQIGIAELHVEEDAGKNTHGSDGYSYVDLNRQGTALIEIVSKPDMSTPEEAYAYLETLRQIVQFTGASDVKMEEGSMRVDTNISVRPIGAKKYGVKSELKNLNSFNHVRLGLAYEIKRQSQLLIAGETIRPETRRFDEKSGETYLMRVKSGADDYRYFPEPDLPPMHIGDDWLKEVQDNMPEMPAKRRTRYVDELGLPEYDAGVLTNTKEMSDFFEAAVANGAAPKQVSNWLMGEVNAYLNDKQIDLQETALTPEHLAQMINLIKDGIISSKIAKKVFQEIIQNDTDPKAWVEAKGMVQLSDPAKLTPIITGILDDNQQSIDDFKNGKDRAVGFLVGKIMKETRGQANPKVVNDLLMAELNKR.

This sequence belongs to the GatB/GatE family. GatB subfamily. As to quaternary structure, heterotrimer of A, B and C subunits.

The catalysed reaction is L-glutamyl-tRNA(Gln) + L-glutamine + ATP + H2O = L-glutaminyl-tRNA(Gln) + L-glutamate + ADP + phosphate + H(+). The enzyme catalyses L-aspartyl-tRNA(Asn) + L-glutamine + ATP + H2O = L-asparaginyl-tRNA(Asn) + L-glutamate + ADP + phosphate + 2 H(+). Its function is as follows. Allows the formation of correctly charged Asn-tRNA(Asn) or Gln-tRNA(Gln) through the transamidation of misacylated Asp-tRNA(Asn) or Glu-tRNA(Gln) in organisms which lack either or both of asparaginyl-tRNA or glutaminyl-tRNA synthetases. The reaction takes place in the presence of glutamine and ATP through an activated phospho-Asp-tRNA(Asn) or phospho-Glu-tRNA(Gln). This is Aspartyl/glutamyl-tRNA(Asn/Gln) amidotransferase subunit B from Latilactobacillus sakei subsp. sakei (strain 23K) (Lactobacillus sakei subsp. sakei).